We begin with the raw amino-acid sequence, 130 residues long: ATP synthase epsilon chain (130 aa).

The protein belongs to the ATPase epsilon chain family. In terms of assembly, F-type ATPases have 2 components, CF(1) - the catalytic core - and CF(0) - the membrane proton channel. CF(1) has five subunits: alpha(3), beta(3), gamma(1), delta(1), epsilon(1). CF(0) has three main subunits: a, b and c.

It localises to the cell membrane. Its function is as follows. Produces ATP from ADP in the presence of a proton gradient across the membrane. This chain is ATP synthase epsilon chain (atpC), found in Mycoplasmoides gallisepticum (strain R(low / passage 15 / clone 2)) (Mycoplasma gallisepticum).